The sequence spans 540 residues: Pentatricopeptide repeat-containing protein At1g14470 (540 aa).

PPR repeat units follow at residues 70-104, 105-134, 135-165, 166-196, 197-227, 228-262, 263-297, 298-328, 330-364, 365-395, 397-431, 432-462, 463-497, and 498-528; these read NVFV…GIMP, DAFS…GFFK, DPYV…ISQR, KGSD…MPEN, DVVS…MPEK, SVVS…GVRP, NETT…RVRL, NCFV…LGTQ, NLVT…NVVS, WNSL…GDSK, DEVT…QIKL, NDSG…MKER, DVVS…GIEP, and DRVT…IRNP.

It belongs to the PPR family. PCMP-A subfamily.

This Arabidopsis thaliana (Mouse-ear cress) protein is Pentatricopeptide repeat-containing protein At1g14470 (PCMP-A4).